A 152-amino-acid chain; its full sequence is Superoxide dismutase [Cu-Zn] (152 aa).

3 residues coordinate Cu cation: His-45, His-47, and His-62. A disulfide bridge links Cys-56 with Cys-145. Positions 62, 70, 79, and 82 each coordinate Zn(2+). His-119 provides a ligand contact to Cu cation.

Belongs to the Cu-Zn superoxide dismutase family. In terms of assembly, homodimer. Cu cation is required as a cofactor. It depends on Zn(2+) as a cofactor.

Its subcellular location is the cytoplasm. It carries out the reaction 2 superoxide + 2 H(+) = H2O2 + O2. Its function is as follows. Destroys radicals which are normally produced within the cells and which are toxic to biological systems. This Brassica oleracea var. capitata (Cabbage) protein is Superoxide dismutase [Cu-Zn] (SODCC).